A 212-amino-acid chain; its full sequence is uncharacterized protein (212 aa).

This is an uncharacterized protein from Archaeoglobus fulgidus (strain ATCC 49558 / DSM 4304 / JCM 9628 / NBRC 100126 / VC-16).